Here is a 296-residue protein sequence, read N- to C-terminus: Probable transcription factor At1g44810 (296 aa).

A disordered region spans residues Met1 to Asn119. Residues Glu19–Gly28 are compositionally biased toward acidic residues. Residues Thr52–Asn72 are compositionally biased toward polar residues. Residues Arg97–Asn119 are compositionally biased toward basic and acidic residues.

It belongs to the GeBP family.

This Arabidopsis thaliana (Mouse-ear cress) protein is Probable transcription factor At1g44810.